Here is a 68-residue protein sequence, read N- to C-terminus: Protease A inhibitor 3 (68 aa).

M1 is modified (N-acetylmethionine). Over residues 1–14 (MNTDQQKVSEIFQS) the composition is skewed to polar residues. 2 disordered regions span residues 1 to 21 (MNTD…KLQG) and 33 to 68 (MASQ…HKKE). Residues 1–32 (MNTDQQKVSEIFQSSKEKLQGDAKVVSDAFKK) are inhibitory domain. Basic and acidic residues predominate over residues 33–53 (MASQDKDGKTTDADESEKHNY).

The protein belongs to the protease inhibitor I34 family.

Functionally, specific and potent inhibitor for yeast aspartic protease A (yscA). The proteinase acts as a folding template stabilizing the helical conformation in the inhibitor, which results in the potent and specific blockage of the proteolytic activity. In Saccharomyces cerevisiae (strain ATCC 204508 / S288c) (Baker's yeast), this protein is Protease A inhibitor 3 (PAI3).